Consider the following 163-residue polypeptide: Seed allergenic protein RAG1 (163 aa).

An N-terminal signal peptide occupies residues 1–27; it reads MASNKVVFSVLLLVVLSVLAAAMATMA. 5 disulfide bridges follow: C39/C90, C53/C78, C61/C122, C79/C138, and C92/C150.

The protein belongs to the cereal trypsin/alpha-amylase inhibitor family. Post-translationally, five disulfide bonds are present.

It is found in the secreted. Functionally, seed storage protein. The protein is Seed allergenic protein RAG1 (RAG1) of Oryza sativa subsp. japonica (Rice).